A 53-amino-acid polypeptide reads, in one-letter code: UPF0391 membrane protein Ent638_0536 (53 aa).

Transmembrane regions (helical) follow at residues 4 to 24 and 27 to 47; these read WGII…GGLA and AAWA…VSLF.

The protein belongs to the UPF0391 family.

It localises to the cell membrane. The sequence is that of UPF0391 membrane protein Ent638_0536 from Enterobacter sp. (strain 638).